The chain runs to 229 residues: Flavin-dependent thymidylate synthase (229 aa).

Residues 1–217 (MEFKVLDKGF…PWTFESFLKF (217 aa)) enclose the ThyX domain. FAD is bound by residues Thr-55, 78–80 (RHR), and Glu-86. DUMP contacts are provided by residues 75 to 78 (QWFR), 86 to 90 (EASLR), and Arg-156. Positions 78-88 (RHRIGSFNEAS) match the ThyX motif motif. FAD-binding positions include 172–174 (NAR) and Asn-178. DUMP is bound at residue Arg-183. Catalysis depends on Arg-183, which acts as the Involved in ionization of N3 of dUMP, leading to its activation.

This sequence belongs to the thymidylate synthase ThyX family. In terms of assembly, homotetramer. FAD is required as a cofactor.

The catalysed reaction is dUMP + (6R)-5,10-methylene-5,6,7,8-tetrahydrofolate + NADPH + H(+) = dTMP + (6S)-5,6,7,8-tetrahydrofolate + NADP(+). It functions in the pathway pyrimidine metabolism; dTTP biosynthesis. Catalyzes the reductive methylation of 2'-deoxyuridine-5'-monophosphate (dUMP) to 2'-deoxythymidine-5'-monophosphate (dTMP) while utilizing 5,10-methylenetetrahydrofolate (mTHF) as the methyl donor, and NADPH and FADH(2) as the reductant. This chain is Flavin-dependent thymidylate synthase, found in Thermosipho melanesiensis (strain DSM 12029 / CIP 104789 / BI429).